The sequence spans 449 residues: Probable phosphoglucosamine mutase (449 aa).

The active-site Phosphoserine intermediate is the Ser96. Residues Ser96, Asp233, Asp235, and Asp237 each contribute to the Mg(2+) site. Ser96 bears the Phosphoserine mark.

The protein belongs to the phosphohexose mutase family. Mg(2+) serves as cofactor. In terms of processing, activated by phosphorylation.

It carries out the reaction alpha-D-glucosamine 1-phosphate = D-glucosamine 6-phosphate. Catalyzes the conversion of glucosamine-6-phosphate to glucosamine-1-phosphate. Does not display phosphoglucomutase (PGM) or phosphomannomutase (PMM) activities. The chain is Probable phosphoglucosamine mutase (glmM) from Thermococcus kodakarensis (strain ATCC BAA-918 / JCM 12380 / KOD1) (Pyrococcus kodakaraensis (strain KOD1)).